The following is a 443-amino-acid chain: MLPFASCLPGSLLLWALLLLLLGAASPQDSEEPDSYTECTDGYEWDADSQHCRDVNECLTIPEACKGEMKCINHYGGYLCLPRSAAVINDLHGEGPPPPVPPAQHPNPCPPGYEPDEQESCVDVDECAQALHDCRPSQDCHNLPGSYQCTCPDGYRKVGPECVDIDECRYRYCQHRCVNLPGSFRCQCEPGFQLGPNNRSCVDVNECDMGAPCEQRCFNSYGTFLCRCNQGYELHRDGFSCSDIDECSYSSYLCQYRCVNEPGRFSCHCPQGYQLLATRLCQDIDECETGAHQCSEAQTCVNFHGGYRCVDTNRCVEPYVQVSDNRCFCPVSNPLCREQPSSIVHRYMSITSERSVPADVFQIQATSVYPGAYNAFQIRAGNTQGDFYIRQINNVSAMLVLARPVTGPREYVLDLEMVTMNSLMSYRASSVLRLTVFVGAYTF.

The N-terminal stretch at 1 to 25 is a signal peptide; that stretch reads MLPFASCLPGSLLLWALLLLLLGAA. Residues 36-81 enclose the EGF-like 1; atypical domain; it reads YTECTDGYEWDADSQHCRDVNECLTIPEACKGEMKCINHYGGYLCL. Intrachain disulfides connect Cys58/Cys121, Cys65/Cys80, Cys71/Cys109, Cys127/Cys140, Cys134/Cys149, Cys151/Cys162, Cys168/Cys177, Cys173/Cys186, Cys188/Cys201, Cys207/Cys217, Cys213/Cys226, Cys228/Cys241, Cys247/Cys258, Cys254/Cys267, Cys269/Cys281, Cys287/Cys300, Cys294/Cys309, and Cys315/Cys327. The EGF-like 2; calcium-binding domain maps to 123–163; sequence DVDECAQALHDCRPSQDCHNLPGSYQCTCPDGYRKVGPECV. Residues 164–202 enclose the EGF-like 3; calcium-binding domain; that stretch reads DIDECRYRYCQHRCVNLPGSFRCQCEPGFQLGPNNRSCV. A glycan (N-linked (GlcNAc...) asparagine) is linked at Asn198. Residues 203–242 form the EGF-like 4; calcium-binding domain; it reads DVNECDMGAPCEQRCFNSYGTFLCRCNQGYELHRDGFSCS. One can recognise an EGF-like 5; calcium-binding domain in the interval 243–282; that stretch reads DIDECSYSSYLCQYRCVNEPGRFSCHCPQGYQLLATRLCQ. The 46-residue stretch at 283 to 328 folds into the EGF-like 6; calcium-binding domain; the sequence is DIDECETGAHQCSEAQTCVNFHGGYRCVDTNRCVEPYVQVSDNRCF. N-linked (GlcNAc...) asparagine glycosylation is present at Asn394.

This sequence belongs to the fibulin family. In terms of assembly, homodimer; disulfide-linked. Multimer; allows heparin binding. Monomer. Interacts with FBN1 (via N-terminal domain); this interaction inhibits EFEMP2 binding to LOX and ELN. Interacts with LOX (via propeptide); this interaction is strong and facilitates formation of ternary complexes with ELN during elastic fiber assembly; this interaction limits interaction of EFEMP2 with FBLN5. Interacts with PITX2. Interacts with ELN with moderate affinity; this interaction regulates ELN self-assembly maturation stage. Interacts with FBLN5 with moderate affinity. Interacts with LOXL1 (via propeptide), LTBP1 and TGFB1 stronger than with LOXL2 and LTBP3. Interacts with PCOLCE. Interacts with collagen type IV trimer (COL4A1-COL4A1-COL4A2), NID2 and moderately with COL15A1-derived endostatin. Interacts with EMILIN1; this interaction promotes the incorporation of EFEMP2 into the extracellular matrix. Interacts with LTBP4; the LTBP4 long form (LTBP4L) has a stronger binding affinity than the LTBP4 short form and the LTBP4 long form promotes fibrillar deposition of EFEMP2. N-glycosylated; contains mostly complex-type glycans. Not O-glycosylated. In terms of processing, cleaved by ELANE; produces a 50-55 kDa fragment. Cleaved by MMP2 and MMP9; produces several fragments.

It is found in the secreted. Its subcellular location is the extracellular space. The protein resides in the extracellular matrix. It localises to the basement membrane. Plays a crucial role in elastic fiber formation in tissue, and in the formation of ultrastructural connections between elastic laminae and smooth muscle cells in the aorta, therefore participates in terminal differentiation and maturation of smooth muscle cell (SMC) and in the mechanical properties and wall integrity maintenance of the aorta. In addition, is involved in the control of collagen fibril assembly in tissue throught proteolytic activation of LOX leading to cross- linking of collagen and elastin. Also promotes ELN coacervation and participates in the deposition of ELN coacervates on to microfibrils but also regulates ELN cross- linking through LOX interaction. Moreover adheres to the cells through heparin binding in a calcium-dependent manner and regulates vascularlar smooth muscle cells proliferation through angiotensin signaling. In Cricetulus griseus (Chinese hamster), this protein is EGF-containing fibulin-like extracellular matrix protein 2.